The primary structure comprises 355 residues: Peptide chain release factor 1 (355 aa).

Gln233 bears the N5-methylglutamine mark. The segment covering 280-293 (ERRKKEQERADSRR) has biased composition (basic and acidic residues). The tract at residues 280 to 308 (ERRKKEQERADSRRGQVGSGDRSERIRTY) is disordered.

Belongs to the prokaryotic/mitochondrial release factor family. Methylated by PrmC. Methylation increases the termination efficiency of RF1.

It localises to the cytoplasm. Peptide chain release factor 1 directs the termination of translation in response to the peptide chain termination codons UAG and UAA. This is Peptide chain release factor 1 from Rickettsia felis (strain ATCC VR-1525 / URRWXCal2) (Rickettsia azadi).